A 649-amino-acid chain; its full sequence is Nitrosuccinic acid synthase npaA (649 aa).

Belongs to the nitrosuccinic acid synthase family. Requires FAD as cofactor.

It carries out the reaction L-aspartate + 3 NADPH + 3 O2 + 2 H(+) = 2-nitrobutanedioate + 3 NADP(+) + 4 H2O. It functions in the pathway mycotoxin biosynthesis. Its function is as follows. Nitrosuccinic acid synthase; part of the gene cluster that mediates the biosynthesis of the deadly neurotoxic nitroalkane 3-nitropropanoic acid (3-NPA) that acts as an antimetabolite of succinate and irreversibly inhibits succinate dehydrogenase and disrupts mitochondrial oxidative phosphorylation. NpaA catalyzes the iterative oxidation of L-aspartic acid to nitrosuccinic acid (2-nitrobutanedioate). Alternative amino acid substrates such as L-glutamate and D-aspartate are not accepted by npaA as a substrate, showing the strict substrate specificity toward L-aspartate. The nitrosuccinic acid decarboxylase npaB then facilitates decarboxylation of Nitrosuccinic acid to produce 3-NPA. This is Nitrosuccinic acid synthase npaA from Aspergillus oryzae (strain ATCC 42149 / RIB 40) (Yellow koji mold).